Reading from the N-terminus, the 545-residue chain is Squalene monooxygenase SE2 (545 aa).

A helical transmembrane segment spans residues 12–32 (EYFLMFAATLLFGFVLYLFTL). Residues 86–87 (VA), 106–107 (ER), Arg-114, Arg-185, Val-201, Asp-364, and Met-377 each bind FAD. 2 consecutive transmembrane segments (helical) span residues 475–495 (LFFHFFAVAIYGVGRLLIPFP) and 500–520 (MWLGARLISGASGIIFPIIKS).

The protein belongs to the squalene monooxygenase family. The cofactor is FAD. In terms of tissue distribution, weak expression in petioles and flower buds and barely detectable in roots and leaves. In petioles, preferentially observed in vascular bundle tissue (phloem cells and parenchymatous cells near xylem) and resin ducts.

It localises to the membrane. The catalysed reaction is squalene + reduced [NADPH--hemoprotein reductase] + O2 = (S)-2,3-epoxysqualene + oxidized [NADPH--hemoprotein reductase] + H2O + H(+). It functions in the pathway terpene metabolism; lanosterol biosynthesis; lanosterol from farnesyl diphosphate: step 2/3. Its function is as follows. Component of the triterpene saponins (e.g. ginsenosides or panaxosides) and phytosterols biosynthetic pathways. Catalyzes the first oxygenation step in sterol biosynthesis and is suggested to be one of the rate-limiting enzymes in this pathway. The sequence is that of Squalene monooxygenase SE2 from Panax ginseng (Korean ginseng).